The chain runs to 486 residues: Protein nucleotidyltransferase YdiU (486 aa).

G90, G92, R93, K113, D125, G126, R176, and R183 together coordinate ATP. D252 serves as the catalytic Proton acceptor. Mg(2+) is bound by residues N253 and D262. D262 is a binding site for ATP.

It belongs to the SELO family. The cofactor is Mg(2+). Mn(2+) is required as a cofactor.

It carries out the reaction L-seryl-[protein] + ATP = 3-O-(5'-adenylyl)-L-seryl-[protein] + diphosphate. The catalysed reaction is L-threonyl-[protein] + ATP = 3-O-(5'-adenylyl)-L-threonyl-[protein] + diphosphate. The enzyme catalyses L-tyrosyl-[protein] + ATP = O-(5'-adenylyl)-L-tyrosyl-[protein] + diphosphate. It catalyses the reaction L-histidyl-[protein] + UTP = N(tele)-(5'-uridylyl)-L-histidyl-[protein] + diphosphate. It carries out the reaction L-seryl-[protein] + UTP = O-(5'-uridylyl)-L-seryl-[protein] + diphosphate. The catalysed reaction is L-tyrosyl-[protein] + UTP = O-(5'-uridylyl)-L-tyrosyl-[protein] + diphosphate. Functionally, nucleotidyltransferase involved in the post-translational modification of proteins. It can catalyze the addition of adenosine monophosphate (AMP) or uridine monophosphate (UMP) to a protein, resulting in modifications known as AMPylation and UMPylation. In Pseudomonas putida (strain ATCC 700007 / DSM 6899 / JCM 31910 / BCRC 17059 / LMG 24140 / F1), this protein is Protein nucleotidyltransferase YdiU.